Here is a 292-residue protein sequence, read N- to C-terminus: Oxidative stress-responsive serine-rich protein 1 (292 aa).

The disordered stretch occupies residues 24 to 178 (ASGSVASLSV…ATQVPQASLK (155 aa)). Positions 65-83 (STRKSSRGAVRTQRRRRSK) are enriched in basic residues. Phosphothreonine is present on residues Thr-143 and Thr-233.

The chain is Oxidative stress-responsive serine-rich protein 1 (OSER1) from Homo sapiens (Human).